The following is a 174-amino-acid chain: Transgelin (174 aa).

Positions 3–109 (SQLEKEAREW…SIHSFSRYAA (107 aa)) constitute a Calponin-homology (CH) domain.

Binds to actin.

It is found in the cytoplasm. In terms of biological role, has actin-binding and actin-bundling activity and is a component of the actin patch. Stabilizes actin filaments against disassembly. Cross-links F-actin and is required for the formation of the contractile F-actin ring. This chain is Transgelin (stg1), found in Schizosaccharomyces pombe (strain 972 / ATCC 24843) (Fission yeast).